A 251-amino-acid chain; its full sequence is Methionine aminopeptidase (251 aa).

H77 serves as a coordination point for substrate. The a divalent metal cation site is built by D94, D105, and H169. A substrate-binding site is contributed by H176. A divalent metal cation contacts are provided by E202 and E233.

Belongs to the peptidase M24A family. Methionine aminopeptidase type 1 subfamily. Monomer. Co(2+) serves as cofactor. The cofactor is Zn(2+). Requires Mn(2+) as cofactor. It depends on Fe(2+) as a cofactor.

The catalysed reaction is Release of N-terminal amino acids, preferentially methionine, from peptides and arylamides.. Its function is as follows. Removes the N-terminal methionine from nascent proteins. The N-terminal methionine is often cleaved when the second residue in the primary sequence is small and uncharged (Met-Ala-, Cys, Gly, Pro, Ser, Thr, or Val). Requires deformylation of the N(alpha)-formylated initiator methionine before it can be hydrolyzed. This chain is Methionine aminopeptidase, found in Mycoplasma capricolum subsp. capricolum (strain California kid / ATCC 27343 / NCTC 10154).